Consider the following 85-residue polypeptide: Sec-independent protein translocase protein TatA (85 aa).

The chain crosses the membrane as a helical span at residues 1–21 (MGGISIWQLLIIALIVVLLFG). The segment at 43-85 (MSSEEDKKALEDAEAAKPVQTAQTAQPTQQATEKKPESNKEQA) is disordered. A compositionally biased stretch (basic and acidic residues) spans 46–57 (EEDKKALEDAEA). A compositionally biased stretch (low complexity) spans 58-73 (AKPVQTAQTAQPTQQA). The segment covering 74-85 (TEKKPESNKEQA) has biased composition (basic and acidic residues).

This sequence belongs to the TatA/E family. As to quaternary structure, the Tat system comprises two distinct complexes: a TatABC complex, containing multiple copies of TatA, TatB and TatC subunits, and a separate TatA complex, containing only TatA subunits. Substrates initially bind to the TatABC complex, which probably triggers association of the separate TatA complex to form the active translocon.

Its subcellular location is the cell inner membrane. In terms of biological role, part of the twin-arginine translocation (Tat) system that transports large folded proteins containing a characteristic twin-arginine motif in their signal peptide across membranes. TatA could form the protein-conducting channel of the Tat system. This Shewanella sp. (strain MR-4) protein is Sec-independent protein translocase protein TatA.